The chain runs to 446 residues: tRNA-2-methylthio-N(6)-dimethylallyladenosine synthase (446 aa).

Residues 2–122 enclose the MTTase N-terminal domain; the sequence is KKAYVKSYGC…LPDLLRQSRE (121 aa). The [4Fe-4S] cluster site is built by Cys11, Cys47, Cys85, Cys157, Cys161, and Cys164. The Radical SAM core domain occupies 143 to 375; that stretch reads RNRGVTGFLT…QDLLDRQRHA (233 aa). Residues 378–440 form the TRAM domain; that stretch reads AASVGTLTEI…SNSLFGETLE (63 aa).

This sequence belongs to the methylthiotransferase family. MiaB subfamily. Monomer. [4Fe-4S] cluster serves as cofactor.

It is found in the cytoplasm. The catalysed reaction is N(6)-dimethylallyladenosine(37) in tRNA + (sulfur carrier)-SH + AH2 + 2 S-adenosyl-L-methionine = 2-methylsulfanyl-N(6)-dimethylallyladenosine(37) in tRNA + (sulfur carrier)-H + 5'-deoxyadenosine + L-methionine + A + S-adenosyl-L-homocysteine + 2 H(+). Catalyzes the methylthiolation of N6-(dimethylallyl)adenosine (i(6)A), leading to the formation of 2-methylthio-N6-(dimethylallyl)adenosine (ms(2)i(6)A) at position 37 in tRNAs that read codons beginning with uridine. In Methylorubrum extorquens (strain PA1) (Methylobacterium extorquens), this protein is tRNA-2-methylthio-N(6)-dimethylallyladenosine synthase.